The primary structure comprises 786 residues: Endonuclease MutS2 (786 aa).

335–342 serves as a coordination point for ATP; sequence GPNTGGKT. A Smr domain is found at 711–786; it reads LDLRGERFEN…GLGVTVVELK (76 aa).

The protein belongs to the DNA mismatch repair MutS family. MutS2 subfamily. Homodimer. Binds to stalled ribosomes, contacting rRNA.

Its function is as follows. Endonuclease that is involved in the suppression of homologous recombination and thus may have a key role in the control of bacterial genetic diversity. Functionally, acts as a ribosome collision sensor, splitting the ribosome into its 2 subunits. Detects stalled/collided 70S ribosomes which it binds and splits by an ATP-hydrolysis driven conformational change. Acts upstream of the ribosome quality control system (RQC), a ribosome-associated complex that mediates the extraction of incompletely synthesized nascent chains from stalled ribosomes and their subsequent degradation. Probably generates substrates for RQC. This chain is Endonuclease MutS2, found in Bacillus cereus (strain Q1).